The sequence spans 331 residues: 2-hydroxyacid dehydrogenase homolog (331 aa).

NAD(+) is bound by residues 154–155 (HI), 234–236 (TSR), and Asp260. The active site involves Arg236. Residue Glu265 is part of the active site. His297 acts as the Proton donor in catalysis. 297–300 (HQAF) is a binding site for NAD(+).

This sequence belongs to the D-isomer specific 2-hydroxyacid dehydrogenase family.

This Zymomonas mobilis subsp. mobilis (strain ATCC 31821 / ZM4 / CP4) protein is 2-hydroxyacid dehydrogenase homolog (ddh).